Reading from the N-terminus, the 227-residue chain is uncharacterized protein (227 aa).

A signal peptide spans 1–21; it reads MELKKIAVGLTALLGMSVANA.

This is an uncharacterized protein from Haemophilus influenzae (strain ATCC 51907 / DSM 11121 / KW20 / Rd).